Consider the following 305-residue polypeptide: tRNA-cytidine(32) 2-sulfurtransferase (305 aa).

The tract at residues 1 to 20 (MTAVLPLPQPLADPAPRDPR) is disordered. The PP-loop motif signature appears at 59–64 (SGGKDS). Residues Cys-134, Cys-137, and Cys-225 each coordinate [4Fe-4S] cluster. Over residues 282 to 293 (DAPSDVDPDPSA) the composition is skewed to low complexity. The interval 282 to 305 (DAPSDVDPDPSAWLSASHAPHDSD) is disordered.

The protein belongs to the TtcA family. As to quaternary structure, homodimer. Requires Mg(2+) as cofactor. [4Fe-4S] cluster is required as a cofactor.

Its subcellular location is the cytoplasm. It catalyses the reaction cytidine(32) in tRNA + S-sulfanyl-L-cysteinyl-[cysteine desulfurase] + AH2 + ATP = 2-thiocytidine(32) in tRNA + L-cysteinyl-[cysteine desulfurase] + A + AMP + diphosphate + H(+). It participates in tRNA modification. Its function is as follows. Catalyzes the ATP-dependent 2-thiolation of cytidine in position 32 of tRNA, to form 2-thiocytidine (s(2)C32). The sulfur atoms are provided by the cysteine/cysteine desulfurase (IscS) system. This is tRNA-cytidine(32) 2-sulfurtransferase from Xanthomonas euvesicatoria pv. vesicatoria (strain 85-10) (Xanthomonas campestris pv. vesicatoria).